Reading from the N-terminus, the 87-residue chain is Kappa 1b-bungarotoxin (87 aa).

The signal sequence occupies residues 1–21; it reads MKTLLLTLVVVTIVCLDLGYT. Intrachain disulfides connect Cys24–Cys42, Cys35–Cys63, Cys48–Cys52, Cys67–Cys79, and Cys80–Cys85.

It belongs to the three-finger toxin family. Long-chain subfamily. Kappa-neurotoxin sub-subfamily. Homo- and heterodimer; non-covalently linked. In terms of tissue distribution, expressed by the venom gland.

It localises to the secreted. Functionally, postsynaptic neurotoxin that binds and inhibits neuronal nicotinic acetylcholine receptors (nAChR) with high affinity (IC(50)&lt;100 nM). Is a selective, and slowly reversible antagonist of alpha-3/CHRNA3-containing and some alpha-4/CHRNA4-containing AChRs. The polypeptide is Kappa 1b-bungarotoxin (Bungarus candidus (Malayan krait)).